An 86-amino-acid chain; its full sequence is MERNQRKTLVGRVVSDKMDKTITVIVETKRNHPVYGKRINYSKKYKAHDEKNLAKEGDIVRIMETRPLSATKRFRLVEIVEEAVII.

It belongs to the universal ribosomal protein uS17 family. Part of the 30S ribosomal subunit.

Its function is as follows. One of the primary rRNA binding proteins, it binds specifically to the 5'-end of 16S ribosomal RNA. The protein is Small ribosomal subunit protein uS17 of Streptococcus equi subsp. equi (strain 4047).